The following is a 695-amino-acid chain: Centrosomal protein of 89 kDa (695 aa).

Disordered regions lie at residues 24–54 (LIPA…RPRS), 66–147 (TGRT…GDED), and 167–272 (AVPL…SEVL). A compositionally biased stretch (pro residues) spans 34–49 (PAVPRTPPPRSPNPSP). Composition is skewed to acidic residues over residues 124–146 (DEDD…EGDE) and 178–189 (DSDVDEETEDSA). Positions 209 to 226 (GQTQPSSLPQPRSVSRRS) are enriched in polar residues. Residues 251-271 (TNKESPVRVNERDRSSEDSEV) are compositionally biased toward basic and acidic residues. Coiled coils occupy residues 276–368 (LEVQ…RYQA) and 406–632 (AYED…LEKE).

It localises to the cytoplasm. The protein localises to the cytosol. It is found in the cytoskeleton. The protein resides in the microtubule organizing center. Its subcellular location is the centrosome. It localises to the spindle pole. The protein localises to the centriole. It is found in the mitochondrion intermembrane space. Its function is as follows. Required for ciliogenesis. Also plays a role in mitochondrial metabolism where it may modulate complex IV activity. The polypeptide is Centrosomal protein of 89 kDa (cep89) (Danio rerio (Zebrafish)).